The chain runs to 633 residues: Protein CASP (633 aa).

Over Met-1–Leu-601 the chain is Cytoplasmic. The interval Gln-39–Pro-60 is disordered. 2 coiled-coil regions span residues Ile-111–Lys-339 and Ser-369–Glu-433. A helical; Anchor for type IV membrane protein transmembrane segment spans residues Phe-602–Ile-622. Over Ala-623–Tyr-633 the chain is Lumenal.

This sequence belongs to the CASP family.

Its subcellular location is the golgi apparatus membrane. Functionally, may be involved in intra-Golgi transport. This Schizosaccharomyces pombe (strain 972 / ATCC 24843) (Fission yeast) protein is Protein CASP (coy1).